The primary structure comprises 361 residues: Microtubule-associated protein Jupiter (361 aa).

Residues 1 to 15 (MISNYDITDSKSSSK) are compositionally biased toward polar residues. Disordered stretches follow at residues 1-38 (MISN…TPRN) and 70-99 (IGDN…TPGK). Serine 24 carries the phosphoserine modification. Threonine 35 is subject to Phosphothreonine. Residues 73–87 (NPRRGQKPVDSHSRL) are compositionally biased toward basic and acidic residues. Threonine 96 bears the Phosphothreonine mark. Residue serine 105 is modified to Phosphoserine. Low complexity-rich tracts occupy residues 125-134 (GSSTANTTNG) and 141-154 (SGSV…VSSS). 2 disordered regions span residues 125–165 (GSST…SGSR) and 328–361 (GSTN…SGLW). Phosphoserine occurs at positions 143 and 154. Over residues 155–165 (TENLKMNSGSR) the composition is skewed to polar residues.

Belongs to the MAP Jupiter family.

Its subcellular location is the nucleus. It is found in the cytoplasm. The protein localises to the cytoskeleton. It localises to the spindle. In terms of biological role, binds to all microtubule populations. This Drosophila persimilis (Fruit fly) protein is Microtubule-associated protein Jupiter.